The chain runs to 260 residues: Exosome complex component Rrp4 (260 aa).

In terms of domain architecture, S1 motif spans 59–128 (NDVVIGIVIV…NSMKVELALR (70 aa)). The region spanning 136-194 (KTGQIVEVEPVKVPRVIGHGGSMISMLKKETNCSIFVGQNGRIWIDGKDDDVELLSKAL) is the KH domain.

The protein belongs to the RRP4 family. In terms of assembly, component of the archaeal exosome complex. Forms a trimer of Rrp4 and/or Csl4 subunits. The trimer associates with a hexameric ring-like arrangement composed of 3 Rrp41-Rrp42 heterodimers.

It is found in the cytoplasm. In terms of biological role, non-catalytic component of the exosome, which is a complex involved in RNA degradation. Increases the RNA binding and the efficiency of RNA degradation. Confers strong poly(A) specificity to the exosome. The sequence is that of Exosome complex component Rrp4 from Methanosarcina barkeri (strain Fusaro / DSM 804).